The following is an 85-amino-acid chain: U4-theraphotoxin-Hhn1a (85 aa).

Residues 1 to 22 form the signal peptide; that stretch reads MKVTLIAILTCAAVLVLHTTAA. The propeptide occupies 23–48; the sequence is EELEAEGQLMEVGMPDTELAAVDEER. Disulfide bonds link Cys-52/Cys-66, Cys-56/Cys-77, and Cys-71/Cys-82.

Belongs to the neurotoxin 12 (Hwtx-2) family. 02 (Hwtx-2) subfamily. As to quaternary structure, monomer. As to expression, expressed by the venom gland.

The protein localises to the secreted. Neurotoxin active on both insects and mammals. The polypeptide is U4-theraphotoxin-Hhn1a (Cyriopagopus hainanus (Chinese bird spider)).